Reading from the N-terminus, the 294-residue chain is S-methyl-5'-thioadenosine phosphorylase (294 aa).

Phosphate-binding positions include S16, 58 to 59, and 91 to 92; these read RH and SA. M189 contributes to the substrate binding site. T190 is a binding site for phosphate. 213–215 provides a ligand contact to substrate; that stretch reads DFD.

This sequence belongs to the PNP/MTAP phosphorylase family. MTAP subfamily. As to quaternary structure, homohexamer. Dimer of a homotrimer.

It carries out the reaction S-methyl-5'-thioadenosine + phosphate = 5-(methylsulfanyl)-alpha-D-ribose 1-phosphate + adenine. The enzyme catalyses 5'-deoxyadenosine + phosphate = 5-deoxy-alpha-D-ribose 1-phosphate + adenine. It participates in amino-acid biosynthesis; L-methionine biosynthesis via salvage pathway; S-methyl-5-thio-alpha-D-ribose 1-phosphate from S-methyl-5'-thioadenosine (phosphorylase route): step 1/1. Catalyzes the reversible phosphorylation of S-methyl-5'-thioadenosine (MTA) to adenine and 5-methylthioribose-1-phosphate. Involved in the breakdown of MTA, a major by-product of polyamine biosynthesis. Responsible for the first step in the methionine salvage pathway after MTA has been generated from S-adenosylmethionine. Has broad substrate specificity with 6-aminopurine nucleosides as preferred substrates. Also catalyzes the phosphorylation of 5'-deoxyadenosine (5'dAdo) to 5-deoxyribose 1-phosphate. Part of a bifunctional DHAP-shunt salvage pathway for SAM by-products. The sequence is that of S-methyl-5'-thioadenosine phosphorylase from Rhodospirillum rubrum (strain ATCC 11170 / ATH 1.1.1 / DSM 467 / LMG 4362 / NCIMB 8255 / S1).